Consider the following 185-residue polypeptide: Large ribosomal subunit protein uL5 (185 aa).

Belongs to the universal ribosomal protein uL5 family. Part of the 50S ribosomal subunit; part of the 5S rRNA/L5/L18/L25 subcomplex. Contacts the 5S rRNA and the P site tRNA. Forms a bridge to the 30S subunit in the 70S ribosome.

Its function is as follows. This is one of the proteins that bind and probably mediate the attachment of the 5S RNA into the large ribosomal subunit, where it forms part of the central protuberance. In the 70S ribosome it contacts protein S13 of the 30S subunit (bridge B1b), connecting the 2 subunits; this bridge is implicated in subunit movement. Contacts the P site tRNA; the 5S rRNA and some of its associated proteins might help stabilize positioning of ribosome-bound tRNAs. The polypeptide is Large ribosomal subunit protein uL5 (Rhodopseudomonas palustris (strain BisA53)).